The chain runs to 164 residues: Phosphopantetheine adenylyltransferase (164 aa).

Ser11 contacts substrate. ATP-binding positions include 11–12 and His19; that span reads SF. Substrate is bound by residues Lys43, Ala76, and Arg90. ATP is bound by residues 91-93, Glu101, and 126-132; these read GLR and YQHISSS.

Belongs to the bacterial CoaD family. In terms of assembly, homohexamer. Mg(2+) serves as cofactor.

It localises to the cytoplasm. The catalysed reaction is (R)-4'-phosphopantetheine + ATP + H(+) = 3'-dephospho-CoA + diphosphate. The protein operates within cofactor biosynthesis; coenzyme A biosynthesis; CoA from (R)-pantothenate: step 4/5. In terms of biological role, reversibly transfers an adenylyl group from ATP to 4'-phosphopantetheine, yielding dephospho-CoA (dPCoA) and pyrophosphate. The polypeptide is Phosphopantetheine adenylyltransferase (Streptococcus sanguinis (strain SK36)).